We begin with the raw amino-acid sequence, 331 residues long: Proline-rich protein 33 (331 aa).

3 disordered regions span residues 1–112 (MGPQ…SVPR), 128–185 (SLES…PKVA), and 204–247 (APEP…APAS). Residues 94–105 (PEEPPVPRPPPG) are compositionally biased toward pro residues. The segment covering 149 to 169 (PPMAGPAAEAERVSSPAWASS) has biased composition (low complexity). Positions 170-185 (PTPPSGPHPCPVPKVA) are enriched in pro residues. Residues 217 to 238 (EPEVPTPTEQEVPAPTEQEVPA) are compositionally biased toward low complexity.

This is Proline-rich protein 33 (PRR33) from Homo sapiens (Human).